The primary structure comprises 395 residues: S-adenosylmethionine synthase (395 aa).

H12 lines the ATP pocket. D14 serves as a coordination point for Mg(2+). K(+) is bound at residue E40. The L-methionine site is built by E53 and Q96. Positions 96–106 (QSKEIADAVNF) are flexible loop. ATP-binding positions include 174–176 (DGK), 242–243 (RF), D251, 257–258 (RK), A274, and K278. Residue D251 coordinates L-methionine. K282 serves as a coordination point for L-methionine.

The protein belongs to the AdoMet synthase family. Homotetramer; dimer of dimers. Mg(2+) serves as cofactor. The cofactor is K(+).

It is found in the cytoplasm. The enzyme catalyses L-methionine + ATP + H2O = S-adenosyl-L-methionine + phosphate + diphosphate. Its pathway is amino-acid biosynthesis; S-adenosyl-L-methionine biosynthesis; S-adenosyl-L-methionine from L-methionine: step 1/1. In terms of biological role, catalyzes the formation of S-adenosylmethionine (AdoMet) from methionine and ATP. The overall synthetic reaction is composed of two sequential steps, AdoMet formation and the subsequent tripolyphosphate hydrolysis which occurs prior to release of AdoMet from the enzyme. In Tropheryma whipplei (strain TW08/27) (Whipple's bacillus), this protein is S-adenosylmethionine synthase.